Here is a 245-residue protein sequence, read N- to C-terminus: Neurovirulence factor ICP34.5 (245 aa).

Over residues 1-15 (MARRRRRHRGPRRPR) the composition is skewed to basic residues. The interval 1 to 17 (MARRRRRHRGPRRPRPP) is required for nucleolar localization. Disordered regions lie at residues 1 to 122 (MARR…PFRL) and 143 to 172 (RRAG…PATP). Polar residues predominate over residues 25-36 (TAQSQVTSTPNS). Residues 67 to 77 (ASDDDDDDDWP) are compositionally biased toward acidic residues. Pro residues-rich tracts occupy residues 78–87 (DSPPPEPAPE) and 113–122 (SHPPSRPFRL). Residues 122–131 (LPPRLALRLR) carry the Nuclear export signal motif. A run of 6 repeats spans residues 155-157 (ATP), 158-160 (ATP), 161-163 (ATP), 164-166 (ATP), 167-169 (ATP), and 170-172 (ATP). A 6 X 3 AA tandem repeats of A-T-P region spans residues 155-172 (ATPATPATPATPATPATP). Over residues 158 to 172 (ATPATPATPATPATP) the composition is skewed to low complexity. The binding to PP1CA stretch occupies residues 172–185 (PARVRFSPHVRVRH). The interval 172–185 (PARVRFSPHVRVRH) is interaction with host PPP1CA. The interval 187–245 (VVWASAARLARRGSWARERADRARFRRRVAEAEAVIGPCLGPEARARALARGAGPANSV) is important for interferon resistance. Residues 197 to 215 (RRGSWARERADRARFRRRV) carry the Bipartite nuclear localization signal motif. The segment at 215–230 (VAEAEAVIGPCLGPEA) is interaction with host EIF2S1/EIF-2ALPHA.

Belongs to the PPP1R15 family. As to quaternary structure, interacts with host PPP1CA to form a high-molecular-weight complex that dephosphorylates EIF2S1/eIF-2alpha. Interacts with host EIF2S1/eIF-2alpha; this interaction is crucial for the specific dephosphorylation of EIF2S1/eIF-2alpha by PPP1CA. Binds to proliferating cell nuclear antigen (PCNA), which may release host cells from growth arrest and facilitate viral replication. Interacts (via N-terminus) with host C1QBP and PRKCA. Interacts with protein UL31. Interacts with host TBK1. Interacts with host STING/TMEM173; this interaction inhibits the intracellular DNA sensing pathway. Interacts with host BECN1; this interaction modulates host autophagy.

It localises to the host cytoplasm. Its subcellular location is the host nucleus. The protein resides in the host nucleolus. The protein localises to the virion. Functionally, inhibits the establishment of the immune response and of the integrated stress response (ISR) in the infected cell. Plays essential roles in viral nuclear egress to mediate capsid transit across the nuclear membrane. Facilitates nuclear egress cooperatively with host C1QBP and protein kinase C/PKC to induce lamin A/C phosphorylation and subsequent reorganization. In turn, lamina disassembles and nuclear egress occurs. Recruits the serine/threonine protein phosphatase PPP1CA/PP1-alpha to dephosphorylate the translation initiation factor EIF2S1/eIF-2alpha, thereby couteracting the host shutoff of protein synthesis involving double-stranded RNA-dependent protein kinase EIF2AK2/PKR. In turn, controls host IRF3 activation and subsequently inhibits host interferon response. Controls the DNA sensing pathway by interacting with and inhibiting host STING/TMEM173. Also down-modulates the host MHC class II proteins cell surface expression. Acts as a neurovirulence factor that has a profound effect on the growth of the virus in central nervous system tissue, by interacting with host BECN1 and thereby antagonizing the host autophagy response. In Homo sapiens (Human), this protein is Neurovirulence factor ICP34.5 (RL1).